The following is a 199-amino-acid chain: Recombination protein RecR (199 aa).

A C4-type zinc finger spans residues 56 to 71; it reads CATCGNVAQEELCNIC. One can recognise a Toprim domain in the interval 79-174; sequence SVICVVEEPK…KVTRLASGLP (96 aa).

The protein belongs to the RecR family.

Its function is as follows. May play a role in DNA repair. It seems to be involved in an RecBC-independent recombinational process of DNA repair. It may act with RecF and RecO. In Streptomyces avermitilis (strain ATCC 31267 / DSM 46492 / JCM 5070 / NBRC 14893 / NCIMB 12804 / NRRL 8165 / MA-4680), this protein is Recombination protein RecR.